The sequence spans 766 residues: Exocyst complex component 6 (766 aa).

Residues asparagine 28–serine 90 are a coiled coil.

The protein belongs to the SEC15 family. In terms of assembly, the exocyst complex is composed of Sec3/Exoc1, Sec5/Exoc2, Sec6/Exoc3, Sec8/Exoc4, Sec10/Exoc5, Sec15/Exoc6, Exo70/Exoc7 and Exo84/Exoc8. Interacts with RAB3, RAB8, RAB11 and RAB27. Detected in developing rhabdomeres in photoreceptor cells.

Its subcellular location is the cell projection. The protein localises to the rhabdomere. Functionally, component of the exocyst complex involved in the docking of exocytic vesicles with fusion sites on the plasma membrane. This Drosophila melanogaster (Fruit fly) protein is Exocyst complex component 6.